Reading from the N-terminus, the 306-residue chain is Mitochondrial 2-oxoglutarate/malate carrier protein (306 aa).

Solcar repeat units follow at residues 7 to 95, 103 to 194, and 203 to 292; these read VPNV…LLER, LSFG…AKQA, and DGIF…MNAA. Transmembrane regions (helical) follow at residues 9–38, 72–93, 108–122, 172–192, 205–226, and 268–286; these read NVVK…NRMQ, SAGL…AFLL, KAVL…GSFV, PTVL…SQAK, IFCH…SMPV, and FTPY…FIIL.

It belongs to the mitochondrial carrier (TC 2.A.29) family. In terms of assembly, interacts with ant-1.1 and ced-9. As to expression, ubiquitously expressed, but highly expressed in the anterior pharynx.

The protein resides in the mitochondrion. The protein localises to the mitochondrion inner membrane. The enzyme catalyses (S)-malate(in) + 2-oxoglutarate(out) = (S)-malate(out) + 2-oxoglutarate(in). The catalysed reaction is malonate(in) + 2-oxoglutarate(out) = malonate(out) + 2-oxoglutarate(in). It carries out the reaction succinate(in) + 2-oxoglutarate(out) = succinate(out) + 2-oxoglutarate(in). It catalyses the reaction maleate(in) + 2-oxoglutarate(out) = maleate(out) + 2-oxoglutarate(in). The enzyme catalyses oxaloacetate(in) + 2-oxoglutarate(out) = oxaloacetate(out) + 2-oxoglutarate(in). Catalyzes the transport of 2-oxoglutarate (alpha-oxoglutarate) across the inner mitochondrial membrane in an electroneutral exchange for malate. Can also exchange 2-oxoglutarate for other dicarboxylic acids such as malonate, succinate, maleate and oxaloacetate, although with lower affinity. Contributes to several metabolic processes, including the malate-aspartate shuttle, the oxoglutarate/isocitrate shuttle, in gluconeogenesis from lactate, and in nitrogen metabolism. Maintains mitochondrial fusion and fission events, and the organization and morphology of cristae. Regulator of apoptosis, insulin secretion and germline proliferation. Furthermore, plays a role in the oxidative stress response regulating endogenous levels of reactive oxygen species (ROS). Involved in the regulation of lin-35/Rb-mediated apoptosis in the germline. In Caenorhabditis elegans, this protein is Mitochondrial 2-oxoglutarate/malate carrier protein.